The sequence spans 505 residues: Olfactomedin-4 (505 aa).

An N-terminal signal peptide occupies residues 1–18; the sequence is MSYSLLFLLALQFCLGSA. N-linked (GlcNAc...) asparagine glycosylation is found at asparagine 64 and asparagine 128. Positions 174–225 form a coiled coil; the sequence is HIIDMLEVEIRNMTLLVEKLESLDQNNVLSIRRQILALKTKLKECEASKSDL. The Olfactomedin-like domain occupies 237-499; sequence SCSHGGVVNI…LLNYDLVFLQ (263 aa). A disulfide bond links cysteine 238 and cysteine 429.

As to quaternary structure, homomultimer; disulfide-linked. Interacts with NDUFA13. Interacts with cell surface lectins (locutions ricinus communis agglutinin I, concanavalin A and wheat germ agglutinin) and cadherin. N-glycosylated.

It is found in the secreted. It localises to the extracellular space. Its subcellular location is the mitochondrion. May promote proliferation of pancreatic cancer cells by favoring the transition from the S to G2/M phase. In myeloid leukemic cell lines, inhibits cell growth and induces cell differentiation and apoptosis. May play a role in the inhibition of EIF4EBP1 phosphorylation/deactivation. Facilitates cell adhesion, most probably through interaction with cell surface lectins and cadherin. The protein is Olfactomedin-4 (Olfm4) of Mus musculus (Mouse).